Here is a 48-residue protein sequence, read N- to C-terminus: uncharacterized protein (48 aa).

It localises to the mitochondrion. This is an uncharacterized protein from Emericella nidulans (Aspergillus nidulans).